The primary structure comprises 335 residues: Glycerol-3-phosphate dehydrogenase [NAD(P)+] (335 aa).

Residues W15, R36, and K109 each coordinate NADPH. Residues K109, G137, and S139 each contribute to the sn-glycerol 3-phosphate site. A141 contacts NADPH. K192, D245, S255, R256, and N257 together coordinate sn-glycerol 3-phosphate. K192 functions as the Proton acceptor in the catalytic mechanism. R256 is a binding site for NADPH. L279 and E281 together coordinate NADPH.

The protein belongs to the NAD-dependent glycerol-3-phosphate dehydrogenase family.

It is found in the cytoplasm. The enzyme catalyses sn-glycerol 3-phosphate + NAD(+) = dihydroxyacetone phosphate + NADH + H(+). It catalyses the reaction sn-glycerol 3-phosphate + NADP(+) = dihydroxyacetone phosphate + NADPH + H(+). Its pathway is membrane lipid metabolism; glycerophospholipid metabolism. Catalyzes the reduction of the glycolytic intermediate dihydroxyacetone phosphate (DHAP) to sn-glycerol 3-phosphate (G3P), the key precursor for phospholipid synthesis. This chain is Glycerol-3-phosphate dehydrogenase [NAD(P)+], found in Beijerinckia indica subsp. indica (strain ATCC 9039 / DSM 1715 / NCIMB 8712).